Consider the following 517-residue polypeptide: Alpha,alpha-trehalose-phosphate synthase [UDP-forming] 1 (517 aa).

The D-glucose 6-phosphate site is built by tyrosine 98 and aspartate 152. UDP-binding residues include arginine 288 and lysine 293. Residues arginine 288 and lysine 293 each coordinate UDP-alpha-D-glucose. Residue arginine 326 participates in D-glucose 6-phosphate binding. Position 387–395 (387–395) interacts with UDP-alpha-D-glucose; the sequence is DGMNLVAYE. 391-395 provides a ligand contact to UDP; that stretch reads LVAYE. The disordered stretch occupies residues 486 to 517; sequence FHAKKASFSDNNSENGEPSNGVETPAQEQVAQ. Residues 493–517 are compositionally biased toward polar residues; it reads FSDNNSENGEPSNGVETPAQEQVAQ.

The protein belongs to the glycosyltransferase 20 family.

It carries out the reaction D-glucose 6-phosphate + UDP-alpha-D-glucose = alpha,alpha-trehalose 6-phosphate + UDP + H(+). It participates in carbohydrate biosynthesis. Its function is as follows. Synthase catalytic subunit of the trehalose synthase complex that catalyzes the production of trehalose from glucose-6-phosphate and UDP-alpha-D-glucose in a two step process. In Aspergillus niger, this protein is Alpha,alpha-trehalose-phosphate synthase [UDP-forming] 1.